The sequence spans 540 residues: Chaperonin GroEL (540 aa).

Residues 30-33, K51, 87-91, G415, 479-481, and D495 contribute to the ATP site; these read TLGP, DGTTT, and NAA.

This sequence belongs to the chaperonin (HSP60) family. As to quaternary structure, forms a cylinder of 14 subunits composed of two heptameric rings stacked back-to-back. Interacts with the co-chaperonin GroES.

It is found in the cytoplasm. It carries out the reaction ATP + H2O + a folded polypeptide = ADP + phosphate + an unfolded polypeptide.. Together with its co-chaperonin GroES, plays an essential role in assisting protein folding. The GroEL-GroES system forms a nano-cage that allows encapsulation of the non-native substrate proteins and provides a physical environment optimized to promote and accelerate protein folding. The chain is Chaperonin GroEL from Raoultella ornithinolytica (Klebsiella ornithinolytica).